The sequence spans 98 residues: NADH-ubiquinone oxidoreductase chain 4L (98 aa).

Transmembrane regions (helical) follow at residues 1–21 (MSLV…GLLM), 29–49 (ALLC…LTIL), and 61–81 (IILL…LVMI).

The protein belongs to the complex I subunit 4L family. In terms of assembly, core subunit of respiratory chain NADH dehydrogenase (Complex I) which is composed of 45 different subunits.

Its subcellular location is the mitochondrion inner membrane. It catalyses the reaction a ubiquinone + NADH + 5 H(+)(in) = a ubiquinol + NAD(+) + 4 H(+)(out). Its function is as follows. Core subunit of the mitochondrial membrane respiratory chain NADH dehydrogenase (Complex I) which catalyzes electron transfer from NADH through the respiratory chain, using ubiquinone as an electron acceptor. Part of the enzyme membrane arm which is embedded in the lipid bilayer and involved in proton translocation. The sequence is that of NADH-ubiquinone oxidoreductase chain 4L (MT-ND4L) from Delphinapterus leucas (Beluga whale).